An 87-amino-acid chain; its full sequence is U3-theraphotoxin-Hhn1i (87 aa).

The signal sequence occupies residues 1–24 (MVNMEASMFLTFAGLVLLFVVCYA). Positions 25 to 52 (SESEEKEFPKEMLSSIFAVDNDFKQEER) are excised as a propeptide. 3 disulfide bridges follow: C54-C67, C61-C72, and C66-C79.

Belongs to the neurotoxin 10 (Hwtx-1) family. 51 (Hntx-8) subfamily. Hntx-8 sub-subfamily. In terms of tissue distribution, expressed by the venom gland.

It localises to the secreted. Ion channel inhibitor. The sequence is that of U3-theraphotoxin-Hhn1i from Cyriopagopus hainanus (Chinese bird spider).